A 256-amino-acid polypeptide reads, in one-letter code: UPF0246 protein HRM2_41860 (256 aa).

Belongs to the UPF0246 family.

The polypeptide is UPF0246 protein HRM2_41860 (Desulforapulum autotrophicum (strain ATCC 43914 / DSM 3382 / VKM B-1955 / HRM2) (Desulfobacterium autotrophicum)).